The sequence spans 409 residues: Alpha-1-antitrypsin (409 aa).

The signal sequence occupies residues 1 to 15; the sequence is LLLAGLCCLLPGSLA. The disordered stretch occupies residues 18 to 39; that stretch reads PQGDAAQKTDTPPHDQNHPTLN. 4 N-linked (GlcNAc...) asparagine glycosylation sites follow: Asn61, Asn98, Asn136, and Asn262. Residues 364 to 383 are RCL; that stretch reads GAMFLEAIPMSIPPEVKFNK. Ser374 carries the phosphoserine modification.

It belongs to the serpin family. In terms of assembly, interacts with CELA2A. Interacts with ERGIC3 and LMAN1/ERGIC53. Interacts with PRSS1/Trypsin. As to expression, plasma.

It localises to the secreted. Inhibitor of serine proteases. Its primary target is elastase, but it also has a moderate affinity for plasmin and thrombin. Inhibits trypsin, chymotrypsin and plasminogen activator. This chain is Alpha-1-antitrypsin (SERPINA1), found in Papio anubis (Olive baboon).